A 337-amino-acid polypeptide reads, in one-letter code: Protein-arginine kinase (337 aa).

One can recognise a Phosphagen kinase C-terminal domain in the interval 12 to 240 (IVIASKVKIL…NKLILREKNQ (229 aa)). ATP is bound by residues 15 to 19 (ASKVK), 162 to 166 (RAKVF), and 193 to 198 (KSIYNS).

Belongs to the ATP:guanido phosphotransferase family.

The catalysed reaction is L-arginyl-[protein] + ATP = N(omega)-phospho-L-arginyl-[protein] + ADP + H(+). In terms of biological role, catalyzes the specific phosphorylation of arginine residues in proteins. This chain is Protein-arginine kinase, found in Clostridium perfringens (strain ATCC 13124 / DSM 756 / JCM 1290 / NCIMB 6125 / NCTC 8237 / Type A).